The following is a 137-amino-acid chain: Endoribonuclease YbeY (137 aa).

Residues histidine 103, histidine 107, and histidine 113 each coordinate Zn(2+).

Belongs to the endoribonuclease YbeY family. Zn(2+) serves as cofactor.

The protein localises to the cytoplasm. In terms of biological role, single strand-specific metallo-endoribonuclease involved in late-stage 70S ribosome quality control and in maturation of the 3' terminus of the 16S rRNA. The protein is Endoribonuclease YbeY of Acholeplasma laidlawii (strain PG-8A).